A 940-amino-acid polypeptide reads, in one-letter code: Chromatin assembly factor 1 subunit FSM (940 aa).

Disordered regions lie at residues 317–473 (NVDD…DPCT), 638–682 (VDSD…FFVP), and 919–940 (KTTQNVNGDTDIPRINLLPSSQ). Over residues 320 to 329 (DSQLQKNTST) the composition is skewed to polar residues. Positions 329–439 (TNEKDTQKAQ…LKKQLAIQKQ (111 aa)) form a coiled coil. Positions 330–429 (NEKDTQKAQK…QKRREKEAVQ (100 aa)) are enriched in basic and acidic residues. Residues 430–440 (LKKQLAIQKQA) are compositionally biased toward low complexity. Residues 445–461 (RFFKNKKDSEKLEKPGG) show a composition bias toward basic and acidic residues. Over residues 638 to 650 (VDSDDEWEEEDPG) the composition is skewed to acidic residues.

This sequence belongs to the CHAF1A family. Component of the chromatin assembly factor 1 (CAF-1) complex, composed of FSM (FAS1), FAS2 and MSI1. As to expression, in embryo, expressed in leaf primordia, coleoptile and radicle. In seedlings, expressed in cell division zone of roots, SAM and leaf primordia. Expressed in floral organ primordia.

The protein localises to the nucleus. Functionally, component of the chromatin assembly factor complex (CAF-1) involved in chromatin assembly following DNA replication and DNA repair. Required for several aspects of development, including apical meristem maintenance by regulating the durations of the S- and G2-phases of the cell cycle through its chromatin assembly activity. The protein is Chromatin assembly factor 1 subunit FSM (FSM) of Oryza sativa subsp. japonica (Rice).